Consider the following 170-residue polypeptide: Nucleoside-triphosphatase THEP1 (170 aa).

Residues 7–14 and 98–105 contribute to the ATP site; these read GMPGVGKT and IIIIDELG.

It belongs to the THEP1 NTPase family.

The catalysed reaction is a ribonucleoside 5'-triphosphate + H2O = a ribonucleoside 5'-diphosphate + phosphate + H(+). Has nucleotide phosphatase activity towards ATP, GTP, CTP, TTP and UTP. May hydrolyze nucleoside diphosphates with lower efficiency. This chain is Nucleoside-triphosphatase THEP1, found in Methanocaldococcus jannaschii (strain ATCC 43067 / DSM 2661 / JAL-1 / JCM 10045 / NBRC 100440) (Methanococcus jannaschii).